Consider the following 121-residue polypeptide: Large ribosomal subunit protein uL18 (121 aa).

This sequence belongs to the universal ribosomal protein uL18 family. Part of the 50S ribosomal subunit; part of the 5S rRNA/L5/L18/L25 subcomplex. Contacts the 5S and 23S rRNAs.

In terms of biological role, this is one of the proteins that bind and probably mediate the attachment of the 5S RNA into the large ribosomal subunit, where it forms part of the central protuberance. This is Large ribosomal subunit protein uL18 from Mesomycoplasma hyopneumoniae (strain 232) (Mycoplasma hyopneumoniae).